We begin with the raw amino-acid sequence, 345 residues long: Molybdate/tungstate-binding protein WtpA (345 aa).

A signal peptide spans 1–27; sequence MREGGVMKKRLLALIVAFAVLTAGCLG. Residues 41-42, Ser75, 160-162, Glu218, and Tyr236 contribute to the molybdate site; these read GS and DPC. Tungstate is bound by residues 41–42, Ser75, 160–162, Glu218, and Tyr236; these read GS and DPC.

Belongs to the bacterial solute-binding protein 1 family. WtpA subfamily. As to quaternary structure, monomer. The complex is composed of two ATP-binding proteins (WtpC), two transmembrane proteins (WtpB) and a solute-binding protein (WtpA).

The protein resides in the cell membrane. In terms of biological role, part of the ABC transporter complex WtpABC involved in molybdate/tungstate import. Binds tungstate and molybdate, with a preference for tungstate. In Pyrococcus furiosus (strain ATCC 43587 / DSM 3638 / JCM 8422 / Vc1), this protein is Molybdate/tungstate-binding protein WtpA.